The sequence spans 325 residues: Myo-inositol dehydrogenase Hyg17 (325 aa).

The protein belongs to the Gfo/Idh/MocA family.

It carries out the reaction myo-inositol + NAD(+) = myo-inosose-5 + NADH + H(+). It functions in the pathway antibiotic biosynthesis. Its function is as follows. Dehydrogenase involved in the biosynthesis of the aminocyclitol moiety of hygromycin A, a broad-spectrum antibiotic. Catalyzes the NAD(+)-dependent oxidation of myo-inositol to myo-inosose-5 (neo-inosose). Shows reduced activity with scyllo-inositol, minimal activity with L-chiro-inositol and no activity with D-glucose, D-chiro-inositol, epi-inositol, muco-inositol and allo-inositol. Is specific for NAD(+) and cannot use NADP(+). The sequence is that of Myo-inositol dehydrogenase Hyg17 from Streptomyces leeuwenhoekii.